A 605-amino-acid chain; its full sequence is Replication and transcription activator (605 aa).

Disordered regions lie at residues 307–381 (SLPS…EPEQ) and 447–509 (RIRP…EDPD). Residues 321–338 (SADCGDSSSSSSDSGNSD) are compositionally biased toward low complexity. Basic and acidic residues predominate over residues 341–353 (QSEREEARAEAPR). The span at 355–364 (RAPKSRRTSR) shows a compositional bias: basic residues.

It belongs to the herpesviridae Rta family. In terms of assembly, interacts with human ATF7IP protein, leading to promote and regulate host genes in virus-infected cells. Interacts with RNA polymerase III complex; this interaction downregulates small RNA transcription and 5'-pppRNA production.

It is found in the host nucleus. Its subcellular location is the virion tegument. Its function is as follows. Immediate-early transcription factor that controls the initiation of viral lytic gene expression and lytic reactivation from latency. Triggers lytic replication, and initiates a cellular senescence program in epithelial cells. Up-regulates human DCR3/TNFRSF6B by directly binding to its receptor. Globally induces a proteasome-dependent loss of SUMOylated proteins in the host cell and the loss of promeylocytic leukemia nuclear bodies. Improves the stability of the triplex capsid protein TRX1 by reducing the ubiquitination level of the latter. Mediates evasion of inflammasome activation and antiviral responses (T- and NK cell activation) during EBV early lytic infection. This Epstein-Barr virus (strain AG876) (HHV-4) protein is Replication and transcription activator.